We begin with the raw amino-acid sequence, 278 residues long: Glutamate racemase (278 aa).

Residues 25-26 (DS) and 57-58 (YG) contribute to the substrate site. Cys89 (proton donor/acceptor) is an active-site residue. 90–91 (NT) is a binding site for substrate. The Proton donor/acceptor role is filled by Cys204. 205 to 206 (TH) provides a ligand contact to substrate.

It belongs to the aspartate/glutamate racemases family.

The enzyme catalyses L-glutamate = D-glutamate. The protein operates within cell wall biogenesis; peptidoglycan biosynthesis. Its function is as follows. Provides the (R)-glutamate required for cell wall biosynthesis. The sequence is that of Glutamate racemase from Brucella anthropi (strain ATCC 49188 / DSM 6882 / CCUG 24695 / JCM 21032 / LMG 3331 / NBRC 15819 / NCTC 12168 / Alc 37) (Ochrobactrum anthropi).